The sequence spans 336 residues: Cell division protein ZipA (336 aa).

Residues 1–2 (ME) are Periplasmic-facing. A helical transmembrane segment spans residues 3–23 (LHILFFILAGLLIAVLISFSL). Residues 24–336 (WSARREKSRI…SRQSYLARVS (313 aa)) lie on the Cytoplasmic side of the membrane. Positions 56–77 (PSLNPQSYAQTTGQHGETEADN) are disordered. A compositionally biased stretch (polar residues) spans 59 to 70 (NPQSYAQTTGQH).

It belongs to the ZipA family. As to quaternary structure, interacts with FtsZ via their C-terminal domains.

The protein localises to the cell inner membrane. Functionally, essential cell division protein that stabilizes the FtsZ protofilaments by cross-linking them and that serves as a cytoplasmic membrane anchor for the Z ring. Also required for the recruitment to the septal ring of downstream cell division proteins. This chain is Cell division protein ZipA, found in Actinobacillus pleuropneumoniae serotype 3 (strain JL03).